A 281-amino-acid polypeptide reads, in one-letter code: Probable endonuclease 4 (281 aa).

Residues H69, H109, E145, D179, H182, H216, D229, H231, and E261 each contribute to the Zn(2+) site.

The protein belongs to the AP endonuclease 2 family. The cofactor is Zn(2+).

It catalyses the reaction Endonucleolytic cleavage to 5'-phosphooligonucleotide end-products.. Functionally, endonuclease IV plays a role in DNA repair. It cleaves phosphodiester bonds at apurinic or apyrimidinic (AP) sites, generating a 3'-hydroxyl group and a 5'-terminal sugar phosphate. The sequence is that of Probable endonuclease 4 from Chlorobaculum tepidum (strain ATCC 49652 / DSM 12025 / NBRC 103806 / TLS) (Chlorobium tepidum).